We begin with the raw amino-acid sequence, 613 residues long: Threonine--tRNA ligase (613 aa).

The tract at residues 1–147 is editing domain; sequence MRLLLIHARS…TITPQESAPQ (147 aa). 2 catalytic regions span residues 199–495 and 200–495; these read PRYI…PALP and RYID…PALP. Zn(2+) contacts are provided by C292, H343, and H464.

Belongs to the class-II aminoacyl-tRNA synthetase family. Homodimer. It depends on Zn(2+) as a cofactor.

It is found in the cytoplasm. The enzyme catalyses tRNA(Thr) + L-threonine + ATP = L-threonyl-tRNA(Thr) + AMP + diphosphate + H(+). Catalyzes the attachment of threonine to tRNA(Thr) in a two-step reaction: L-threonine is first activated by ATP to form Thr-AMP and then transferred to the acceptor end of tRNA(Thr). Also edits incorrectly charged L-seryl-tRNA(Thr). In Caldivirga maquilingensis (strain ATCC 700844 / DSM 13496 / JCM 10307 / IC-167), this protein is Threonine--tRNA ligase.